Reading from the N-terminus, the 215-residue chain is uncharacterized protein (215 aa).

The next 5 helical transmembrane spans lie at Trp-9 to Gly-29, Leu-50 to Phe-70, Ile-77 to Leu-97, Ile-107 to Ala-127, and Ile-160 to Ile-180.

It localises to the cell membrane. This is an uncharacterized protein from Bacillus subtilis (strain 168).